The following is a 61-amino-acid chain: Small ribosomal subunit protein uS14 (61 aa).

Zn(2+) is bound by residues Cys24, Cys27, Cys40, and Cys43.

The protein belongs to the universal ribosomal protein uS14 family. Zinc-binding uS14 subfamily. As to quaternary structure, part of the 30S ribosomal subunit. Contacts proteins S3 and S10. It depends on Zn(2+) as a cofactor.

Binds 16S rRNA, required for the assembly of 30S particles and may also be responsible for determining the conformation of the 16S rRNA at the A site. The protein is Small ribosomal subunit protein uS14 of Alkaliphilus metalliredigens (strain QYMF).